We begin with the raw amino-acid sequence, 467 residues long: Uronate isomerase (467 aa).

It belongs to the metallo-dependent hydrolases superfamily. Uronate isomerase family.

The catalysed reaction is D-glucuronate = D-fructuronate. It catalyses the reaction aldehydo-D-galacturonate = keto-D-tagaturonate. The protein operates within carbohydrate metabolism; pentose and glucuronate interconversion. The polypeptide is Uronate isomerase (Flavobacterium johnsoniae (strain ATCC 17061 / DSM 2064 / JCM 8514 / BCRC 14874 / CCUG 350202 / NBRC 14942 / NCIMB 11054 / UW101) (Cytophaga johnsonae)).